Consider the following 72-residue polypeptide: Translation initiation factor IF-1 (72 aa).

Residues 1–72 (MAKEDVIEFS…TKGRITFRYK (72 aa)) form the S1-like domain.

Belongs to the IF-1 family. As to quaternary structure, component of the 30S ribosomal translation pre-initiation complex which assembles on the 30S ribosome in the order IF-2 and IF-3, IF-1 and N-formylmethionyl-tRNA(fMet); mRNA recruitment can occur at any time during PIC assembly.

It is found in the cytoplasm. One of the essential components for the initiation of protein synthesis. Stabilizes the binding of IF-2 and IF-3 on the 30S subunit to which N-formylmethionyl-tRNA(fMet) subsequently binds. Helps modulate mRNA selection, yielding the 30S pre-initiation complex (PIC). Upon addition of the 50S ribosomal subunit IF-1, IF-2 and IF-3 are released leaving the mature 70S translation initiation complex. In Paramagnetospirillum magneticum (strain ATCC 700264 / AMB-1) (Magnetospirillum magneticum), this protein is Translation initiation factor IF-1.